The chain runs to 213 residues: Large ribosomal subunit protein uL1 (213 aa).

It belongs to the universal ribosomal protein uL1 family. As to quaternary structure, part of the 50S ribosomal subunit.

Binds directly to 23S rRNA. Probably involved in E site tRNA release. Its function is as follows. Protein L1 is also a translational repressor protein, it controls the translation of its operon by binding to its mRNA. The sequence is that of Large ribosomal subunit protein uL1 from Nanoarchaeum equitans (strain Kin4-M).